The primary structure comprises 192 residues: Ion-translocating oxidoreductase complex subunit B (192 aa).

The segment at 1–26 (MNTIWIAVGALALLGLVFGAILGYAS) is hydrophobic. The region spanning 32–91 (EDDPVVEKIDAILPQSQCGQCGYPGCRPYAEAVGLQGEKINRCAPGGEAVMLKIAELLNV) is the 4Fe-4S domain. Residues C49, C52, C57, C74, C117, C120, C123, C127, C147, C150, C153, and C157 each coordinate [4Fe-4S] cluster. 4Fe-4S ferredoxin-type domains are found at residues 108–137 (MLAV…GATR) and 138–167 (AMHT…LRPV).

Belongs to the 4Fe4S bacterial-type ferredoxin family. RnfB subfamily. As to quaternary structure, the complex is composed of six subunits: RsxA, RsxB, RsxC, RsxD, RsxE and RsxG. [4Fe-4S] cluster is required as a cofactor.

Its subcellular location is the cell inner membrane. Its function is as follows. Part of a membrane-bound complex that couples electron transfer with translocation of ions across the membrane. Required to maintain the reduced state of SoxR. In Salmonella newport (strain SL254), this protein is Ion-translocating oxidoreductase complex subunit B.